We begin with the raw amino-acid sequence, 247 residues long: Uridylate kinase (247 aa).

18-21 is a binding site for ATP; the sequence is KLSG. Glycine 60 contacts UMP. ATP-binding residues include glycine 61 and arginine 65. UMP is bound by residues aspartate 80 and 141–148; that span reads TGNPFFTT. Residues threonine 168, tyrosine 174, and aspartate 177 each coordinate ATP.

The protein belongs to the UMP kinase family. Homohexamer.

It localises to the cytoplasm. It catalyses the reaction UMP + ATP = UDP + ADP. The protein operates within pyrimidine metabolism; CTP biosynthesis via de novo pathway; UDP from UMP (UMPK route): step 1/1. Inhibited by UTP. Functionally, catalyzes the reversible phosphorylation of UMP to UDP. The polypeptide is Uridylate kinase (Pseudomonas putida (strain ATCC 47054 / DSM 6125 / CFBP 8728 / NCIMB 11950 / KT2440)).